Consider the following 231-residue polypeptide: Sugar fermentation stimulation protein homolog (231 aa).

This sequence belongs to the SfsA family.

This Geobacter sp. (strain M21) protein is Sugar fermentation stimulation protein homolog.